Reading from the N-terminus, the 119-residue chain is MNIDQYLPVLLFILVGMGVGVVPLVLGYVLGPNRPDAAKNSPYECGFEAFEDARMKFDVRYYLVAILFILFDLEIAFLLPWAVALRDVGGAGFAAVLIFLTVLVVGFVYEWKKGALDWD.

3 helical membrane passes run 9–29 (VLLF…LGYV), 63–83 (LVAI…PWAV), and 88–108 (VGGA…VGFV).

Belongs to the complex I subunit 3 family. As to quaternary structure, NDH-1 is composed of 14 different subunits. Subunits NuoA, H, J, K, L, M, N constitute the membrane sector of the complex.

It is found in the cell inner membrane. It catalyses the reaction a quinone + NADH + 5 H(+)(in) = a quinol + NAD(+) + 4 H(+)(out). NDH-1 shuttles electrons from NADH, via FMN and iron-sulfur (Fe-S) centers, to quinones in the respiratory chain. The immediate electron acceptor for the enzyme in this species is believed to be ubiquinone. Couples the redox reaction to proton translocation (for every two electrons transferred, four hydrogen ions are translocated across the cytoplasmic membrane), and thus conserves the redox energy in a proton gradient. In Delftia acidovorans (strain DSM 14801 / SPH-1), this protein is NADH-quinone oxidoreductase subunit A.